We begin with the raw amino-acid sequence, 419 residues long: Structure-specific endonuclease subunit slx4 (419 aa).

The protein belongs to the SLX4 family. Forms a heterodimer with slx1. Phosphorylated in response to DNA damage.

It localises to the nucleus. The protein localises to the nucleolus. Functionally, regulatory subunit of the slx1-slx4 structure-specific endonuclease that resolves DNA secondary structures generated during DNA repair and recombination. Has endonuclease activity towards branched DNA substrates, introducing single-strand cuts in duplex DNA close to junctions with ss-DNA. Has a preference for stem-loop (SL) and splayed arm Y structures. Introduces a single-strand cut in duplex DNA on the 3' side of a double-strand/single-strand junction with respect to the single-strand moving 3' to 5' away from the junction. Plays a critical role in maintaining the integrity of the ribosomal DNA (rDNA) loci, where it has a role in re-starting stalled replication forks. The complex initiates homologous recombination (HR) events, used to maintain rDNA copy number, in the rDNA repeats that are processed by a mechanism that requires rad22, but not rhp51. Has Holliday junction resolvase activity in vitro. Slx4 is required for efficient processing of DNA substrates. This chain is Structure-specific endonuclease subunit slx4, found in Schizosaccharomyces pombe (strain 972 / ATCC 24843) (Fission yeast).